The following is a 285-amino-acid chain: MRTLHDLPAPAKLNLFLHITGRRPDGYHLLQSVFMLIDWCDTLHIELRPDGGISREDMGAGLPADDLCTRAARALQAATGTRQGAHIVLEKSIPAQAGMGGGSSDAATTLLALNRLWGLGLGRTALERIGLSLGADIPFFLRGRNAWVEGIGETIMPLENVHALPQSRFVVVKPEAGLDTKSIFSSPSLERNSERATISGFAAAHYQFGKNVLQPVAETLCPEVSEAIRWLEHKGLQARMTGSGSAVFAQMTHAIDLFDLPTGWRAKVCDNLRLHPLAGWAADED.

K12 is an active-site residue. 94 to 104 (PAQAGMGGGSS) contacts ATP. Residue D136 is part of the active site.

This sequence belongs to the GHMP kinase family. IspE subfamily.

It carries out the reaction 4-CDP-2-C-methyl-D-erythritol + ATP = 4-CDP-2-C-methyl-D-erythritol 2-phosphate + ADP + H(+). It participates in isoprenoid biosynthesis; isopentenyl diphosphate biosynthesis via DXP pathway; isopentenyl diphosphate from 1-deoxy-D-xylulose 5-phosphate: step 3/6. Functionally, catalyzes the phosphorylation of the position 2 hydroxy group of 4-diphosphocytidyl-2C-methyl-D-erythritol. The chain is 4-diphosphocytidyl-2-C-methyl-D-erythritol kinase from Paracidovorax citrulli (strain AAC00-1) (Acidovorax citrulli).